The chain runs to 101 residues: Protein Tat (101 aa).

The disordered stretch occupies residues 1–20 (MEVVDPNLDPWKHPGSQPET). The segment at 1 to 24 (MEVVDPNLDPWKHPGSQPETPCNK) is interaction with human CREBBP. Residues 1–48 (MEVVDPNLDPWKHPGSQPETPCNKCYCKKCCFHCQLCFTRKGLGISYG) form a transactivation region. Zn(2+)-binding residues include Cys22, Cys25, and Cys27. Positions 22–37 (CNKCYCKKCCFHCQLC) are cysteine-rich. An N6-acetyllysine; by host PCAF modification is found at Lys28. Zn(2+) is bound by residues Cys30, His33, Cys34, and Cys37. Residues 38–48 (FTRKGLGISYG) are core. The interval 47–101 (YGRKKRRQRRRTPQSGEVHQDPVSKQPLSQTRGDPKGPEESKKKVESKTKTDPSD) is disordered. Positions 48 to 58 (GRKKRRQRRRT) are enriched in basic residues. Residues 49–57 (RKKRRQRRR) carry the Nuclear localization signal, RNA-binding (TAR), and protein transduction motif. Positions 49–86 (RKKRRQRRRTPQSGEVHQDPVSKQPLSQTRGDPKGPEE) are interaction with the host capping enzyme RNGTT. An N6-acetyllysine; by host EP300 and GCN5L2 mark is found at Lys50 and Lys51. Asymmetric dimethylarginine; by host PRMT6 is present on residues Arg52 and Arg53. A Glycyl lysine isopeptide (Lys-Gly) (interchain with G-Cter in ubiquitin) cross-link involves residue Lys71. Positions 78–80 (RGD) match the Cell attachment site motif. The segment covering 79-101 (GDPKGPEESKKKVESKTKTDPSD) has biased composition (basic and acidic residues).

It belongs to the lentiviruses Tat family. As to quaternary structure, interacts with host CCNT1. Associates with the P-TEFb complex composed at least of Tat, P-TEFb (CDK9 and CCNT1), TAR RNA, RNA Pol II. Recruits the HATs CREBBP, TAF1/TFIID, EP300, PCAF and GCN5L2. Interacts with host KAT5/Tip60; this interaction targets the latter to degradation. Interacts with the host deacetylase SIRT1. Interacts with host capping enzyme RNGTT; this interaction stimulates RNGTT. Binds to host KDR, and to the host integrins ITGAV/ITGB3 and ITGA5/ITGB1. Interacts with host KPNB1/importin beta-1 without previous binding to KPNA1/importin alpha-1. Interacts with EIF2AK2. Interacts with host nucleosome assembly protein NAP1L1; this interaction may be required for the transport of Tat within the nucleus, since the two proteins interact at the nuclear rim. Interacts with host C1QBP/SF2P32; this interaction involves lysine-acetylated Tat. Interacts with the host chemokine receptors CCR2, CCR3 and CXCR4. Interacts with host DPP4/CD26; this interaction may trigger an anti-proliferative effect. Interacts with host LDLR. Interacts with the host extracellular matrix metalloproteinase MMP1. Interacts with host PRMT6; this interaction mediates Tat's methylation. Interacts with, and is ubiquitinated by MDM2/Hdm2. Interacts with host PSMC3 and HTATIP2. Interacts with STAB1; this interaction may overcome SATB1-mediated repression of IL2 and IL2RA (interleukin) in T cells by binding to the same domain than HDAC1. Interacts (when acetylated) with human CDK13, thereby increasing HIV-1 mRNA splicing and promoting the production of the doubly spliced HIV-1 protein Nef. Interacts with host TBP; this interaction modulates the activity of transcriptional pre-initiation complex. Interacts with host RELA. Interacts with host PLSCR1; this interaction negatively regulates Tat transactivation activity by altering its subcellular distribution. Post-translationally, asymmetrical arginine methylation by host PRMT6 seems to diminish the transactivation capacity of Tat and affects the interaction with host CCNT1. In terms of processing, acetylation by EP300, CREBBP, GCN5L2/GCN5 and PCAF regulates the transactivation activity of Tat. EP300-mediated acetylation of Lys-50 promotes dissociation of Tat from the TAR RNA through the competitive binding to PCAF's bromodomain. In addition, the non-acetylated Tat's N-terminus can also interact with PCAF. PCAF-mediated acetylation of Lys-28 enhances Tat's binding to CCNT1. Lys-50 is deacetylated by SIRT1. Polyubiquitination by host MDM2 does not target Tat to degradation, but activates its transactivation function and fosters interaction with CCNT1 and TAR RNA. Post-translationally, phosphorylated by EIF2AK2 on serine and threonine residues adjacent to the basic region important for TAR RNA binding and function. Phosphorylation of Tat by EIF2AK2 is dependent on the prior activation of EIF2AK2 by dsRNA.

The protein resides in the host nucleus. The protein localises to the host nucleolus. Its subcellular location is the host cytoplasm. It is found in the secreted. Its function is as follows. Transcriptional activator that increases RNA Pol II processivity, thereby increasing the level of full-length viral transcripts. Recognizes a hairpin structure at the 5'-LTR of the nascent viral mRNAs referred to as the transactivation responsive RNA element (TAR) and recruits the cyclin T1-CDK9 complex (P-TEFb complex) that will in turn hyperphosphorylate the RNA polymerase II to allow efficient elongation. The CDK9 component of P-TEFb and other Tat-activated kinases hyperphosphorylate the C-terminus of RNA Pol II that becomes stabilized and much more processive. Other factors such as HTATSF1/Tat-SF1, SUPT5H/SPT5, and HTATIP2 are also important for Tat's function. Besides its effect on RNA Pol II processivity, Tat induces chromatin remodeling of proviral genes by recruiting the histone acetyltransferases (HATs) CREBBP, EP300 and PCAF to the chromatin. This also contributes to the increase in proviral transcription rate, especially when the provirus integrates in transcriptionally silent region of the host genome. To ensure maximal activation of the LTR, Tat mediates nuclear translocation of NF-kappa-B by interacting with host RELA. Through its interaction with host TBP, Tat may also modulate transcription initiation. Tat can reactivate a latently infected cell by penetrating in it and transactivating its LTR promoter. In the cytoplasm, Tat is thought to act as a translational activator of HIV-1 mRNAs. Extracellular circulating Tat can be endocytosed by surrounding uninfected cells via the binding to several surface receptors such as CD26, CXCR4, heparan sulfate proteoglycans (HSPG) or LDLR. Neurons are rarely infected, but they internalize Tat via their LDLR. Through its interaction with nuclear HATs, Tat is potentially able to control the acetylation-dependent cellular gene expression. Modulates the expression of many cellular genes involved in cell survival, proliferation or in coding for cytokines or cytokine receptors. Tat plays a role in T-cell and neurons apoptosis. Tat induced neurotoxicity and apoptosis probably contribute to neuroAIDS. Circulating Tat also acts as a chemokine-like and/or growth factor-like molecule that binds to specific receptors on the surface of the cells, affecting many cellular pathways. In the vascular system, Tat binds to ITGAV/ITGB3 and ITGA5/ITGB1 integrins dimers at the surface of endothelial cells and competes with bFGF for heparin-binding sites, leading to an excess of soluble bFGF. In Homo sapiens (Human), this protein is Protein Tat.